The sequence spans 685 residues: MNQSRSRSDGGSEETLPQDHNHHENERRWQQERLHREEAYYQFINELNDEDYRLMRDHNLLGTPGEITSEELQQRLDGVKEQLASQPDLRDGTNYRDSEVPRESSHEDSLLEWLNTFRRTGNATRSGQNGNQTWRAVSRTNPNNGEFRFSLEIHVNHENRGFEIHGEDYTDIPLSDSNRDHTANRQQRSTSPVARRTRSQTSVNFNGSSSNIPRTRLASRGQNPAEGSFSTLGRLRNGIGGAAGIPRANASRTNFSSHTNQSGGSELRQREGQRFGAAHVWENGARSNVTVRNTNQRLEPIRLRSTSNSRSRSPIQRQSGTVYHNSQRESRPVQQTTRRSVRRRGRTRVFLEQDRERERRGTAYTPFSNSRLVSRITVEEGEESSRSSTAVRRHPTITLDLQVRRIRPGENRDRDSIANRTRSRVGLAENTVTIESNSGGFRRTISRLERSGIRTYVSTITVPLRRISENELVEPSSVALRSILRQIMTGFGELSSLMEADSESELQRNGQHLPDMHSELSNLGTDNNRSQHREGSSQDRQAQGDSTEMHGENETTQPHTRNSDSRGGRQLRNPNNLVETGTLPILRLAHFFLLNESDDDDRIRGLTKEQIDNLSTRHYEHNSIDSELGKICSVCISDYVTGNKLRQLPCMHEFHIHCIDRWLSENCTCPICRQPVLGSNIANNG.

Composition is skewed to basic and acidic residues over residues 1–10 (MNQSRSRSDG), 17–29 (PQDH…ERRW), and 88–107 (DLRD…SSHE). Disordered stretches follow at residues 1 to 29 (MNQS…ERRW), 81 to 107 (EQLA…SSHE), 121 to 142 (GNAT…RTNP), 168 to 273 (DYTD…REGQ), 286 to 345 (RSNV…RRRG), and 499 to 576 (EADS…NPNN). Composition is skewed to polar residues over residues 199 to 213 (SQTS…SNIP), 250 to 264 (ASRT…QSGG), and 286 to 297 (RSNVTVRNTNQR). Residues 303-313 (LRSTSNSRSRS) show a composition bias toward low complexity. Composition is skewed to polar residues over residues 314–325 (PIQRQSGTVYHN) and 519–528 (ELSNLGTDNN). An RING-type zinc finger spans residues 632–673 (CSVCISDYVTGNKLRQLPCMHEFHIHCIDRWLSENCTCPICR).

The protein belongs to the RNF12 family. Weakly expressed in peripheral blood, spleen, prostate, testis and ovary. According to a report, it is preferentially expressed in testis and ovary and hardly detected in other tissues.

The protein resides in the nucleus. It is found in the cytoplasm. It localises to the cell projection. The protein localises to the axon. Its subcellular location is the PML body. It catalyses the reaction S-ubiquitinyl-[E2 ubiquitin-conjugating enzyme]-L-cysteine + [acceptor protein]-L-lysine = [E2 ubiquitin-conjugating enzyme]-L-cysteine + N(6)-ubiquitinyl-[acceptor protein]-L-lysine.. It participates in protein modification; protein ubiquitination. In terms of biological role, E3 ubiquitin-protein ligase mediating 'Lys-48'-linked polyubiquitination of LIMK1 and its subsequent targeting to the proteasome for degradation. Negatively regulates axonal outgrowth through regulation of the LIMK1 turnover. Mediates 'Lys-6' and 'Lys-27'-linked polyubiquitination of AR/androgen receptor thereby modulating its transcriptional activity. May also bind DNA and function as a transcriptional regulator. Mediates polyubiquitination of QKI in macrophages, leading to its degradation. The chain is E3 ubiquitin-protein ligase RNF6 from Homo sapiens (Human).